Here is a 262-residue protein sequence, read N- to C-terminus: Adenosylcobinamide-GDP ribazoletransferase (262 aa).

The next 5 helical transmembrane spans lie at 41-61 (AFPLAAILITLPAAAIAFILG), 65-85 (ASSLFSAFLVVAVQAMVTGAL), 115-132 (IGTYGAVALILSFGLRVS), 134-156 (LAAFLPLLTPTGGGIALLATAAL), and 195-215 (GVLLALVLFFLAGIPTVAVWL).

Belongs to the CobS family. It depends on Mg(2+) as a cofactor.

It is found in the cell inner membrane. It catalyses the reaction alpha-ribazole + adenosylcob(III)inamide-GDP = adenosylcob(III)alamin + GMP + H(+). It carries out the reaction alpha-ribazole 5'-phosphate + adenosylcob(III)inamide-GDP = adenosylcob(III)alamin 5'-phosphate + GMP + H(+). It functions in the pathway cofactor biosynthesis; adenosylcobalamin biosynthesis; adenosylcobalamin from cob(II)yrinate a,c-diamide: step 7/7. Its function is as follows. Joins adenosylcobinamide-GDP and alpha-ribazole to generate adenosylcobalamin (Ado-cobalamin). Also synthesizes adenosylcobalamin 5'-phosphate from adenosylcobinamide-GDP and alpha-ribazole 5'-phosphate. In Rhizobium meliloti (strain 1021) (Ensifer meliloti), this protein is Adenosylcobinamide-GDP ribazoletransferase.